A 320-amino-acid chain; its full sequence is D-alanine--D-alanine ligase (320 aa).

An ATP-grasp domain is found at 101 to 317 (KMIFQGAGLP…FSELVCKILS (217 aa)). 148–203 (INQLGLPLIVKPSREGSSFGMTKVEHLDQLDDALKKAWHYDEEILVEKWHFGTELT) lines the ATP pocket. Asp271, Glu284, and Asn286 together coordinate Mg(2+).

Belongs to the D-alanine--D-alanine ligase family. Mg(2+) serves as cofactor. The cofactor is Mn(2+).

It localises to the cytoplasm. It catalyses the reaction 2 D-alanine + ATP = D-alanyl-D-alanine + ADP + phosphate + H(+). It functions in the pathway cell wall biogenesis; peptidoglycan biosynthesis. In terms of biological role, cell wall formation. This Hamiltonella defensa subsp. Acyrthosiphon pisum (strain 5AT) protein is D-alanine--D-alanine ligase.